Reading from the N-terminus, the 1188-residue chain is AT-rich interactive domain-containing protein 5B (1188 aa).

Residue Lys130 forms a Glycyl lysine isopeptide (Lys-Gly) (interchain with G-Cter in SUMO2) linkage. Positions 251-277 are disordered; it reads RPRKKKPCPQRRDSFSGVKDSNNNSDG. Ser264 is subject to Phosphoserine. The region spanning 318-410 is the ARID domain; it reads RADEQAFLVA…LILPYERFIK (93 aa). Position 336 is an N6,N6-dimethyllysine (Lys336). Residues 412–611 form a disordered region; sequence EEDKPLPPIK…QPPLANQNET (200 aa). Residue Lys445 forms a Glycyl lysine isopeptide (Lys-Gly) (interchain with G-Cter in SUMO2) linkage. Positions 446 to 458 are enriched in basic and acidic residues; sequence HEIPKSKKEKENA. Residues Lys494 and Lys496 each participate in a glycyl lysine isopeptide (Lys-Gly) (interchain with G-Cter in SUMO2) cross-link. The span at 597–609 shows a compositional bias: polar residues; sequence SFPTTQPPLANQN. Residues Lys767, Lys774, Lys803, and Lys810 each participate in a glycyl lysine isopeptide (Lys-Gly) (interchain with G-Cter in SUMO2) cross-link. Disordered regions lie at residues 846 to 874 and 891 to 918; these read HHLHNEQTSKYPSRDMYRESENSSFPSHR and DKKSAAAEAPTDDQPTDLSLPKNPHKPT. Residues 847–866 show a composition bias toward basic and acidic residues; it reads HLHNEQTSKYPSRDMYRESE. Residues Lys893, Lys916, Lys920, and Lys935 each participate in a glycyl lysine isopeptide (Lys-Gly) (interchain with G-Cter in SUMO2) cross-link. The tract at residues 956–978 is disordered; that stretch reads RVSPMTMSGPKKYPESLSRSGKP. Glycyl lysine isopeptide (Lys-Gly) (interchain with G-Cter in SUMO2) cross-links involve residues Lys988, Lys1000, and Lys1013. The disordered stretch occupies residues 1028–1070; sequence ARAVSPLDPSKEVSGKEKASEQESEGSKAAHGGHSGGGSEGHK. A Phosphoserine modification is found at Ser1032. Positions 1036 to 1055 are enriched in basic and acidic residues; that stretch reads PSKEVSGKEKASEQESEGSK. Residues Lys1055 and Lys1070 each participate in a glycyl lysine isopeptide (Lys-Gly) (interchain with G-Cter in SUMO2) cross-link. Ser1133 bears the Phosphoserine mark.

Belongs to the ARID5B family. Methylation at Lys-336 prevents DNA-binding. Demethylation by PHF2 promotes recruitment of the PHF2-ARID5B complex to promoters. In terms of tissue distribution, widely expressed, including in liver (at protein level).

The protein resides in the nucleus. Its function is as follows. Transcription coactivator that binds to the 5'-AATA[CT]-3' core sequence and plays a key role in adipogenesis and liver development. Acts by forming a complex with phosphorylated PHF2, which mediates demethylation at Lys-336, leading to target the PHF2-ARID5B complex to target promoters, where PHF2 mediates demethylation of dimethylated 'Lys-9' of histone H3 (H3K9me2), followed by transcription activation of target genes. The PHF2-ARID5B complex acts as a coactivator of HNF4A in liver. Required for adipogenesis: regulates triglyceride metabolism in adipocytes by regulating expression of adipogenic genes. Overexpression leads to induction of smooth muscle marker genes, suggesting that it may also act as a regulator of smooth muscle cell differentiation and proliferation. Represses the cytomegalovirus enhancer. This chain is AT-rich interactive domain-containing protein 5B (ARID5B), found in Homo sapiens (Human).